Here is a 163-residue protein sequence, read N- to C-terminus: Globin CTT-Z (163 aa).

Residues 1–16 (MKFFAVLALCIVGAIA) form the signal peptide. One can recognise a Globin domain in the interval 18–162 (PLTSDEAALV…VYTAVFQIVT (145 aa)). Heme b is bound by residues H76 and H111.

It belongs to the globin family.

This Chironomus thummi thummi (Midge) protein is Globin CTT-Z (CTT-Z).